The sequence spans 130 residues: Small ribosomal subunit protein uS8 (130 aa).

Belongs to the universal ribosomal protein uS8 family. In terms of assembly, part of the 30S ribosomal subunit. Contacts proteins S5 and S12.

In terms of biological role, one of the primary rRNA binding proteins, it binds directly to 16S rRNA central domain where it helps coordinate assembly of the platform of the 30S subunit. In Shewanella frigidimarina (strain NCIMB 400), this protein is Small ribosomal subunit protein uS8.